Consider the following 587-residue polypeptide: Adenine deaminase (587 aa).

Belongs to the metallo-dependent hydrolases superfamily. Adenine deaminase family. The cofactor is Mn(2+).

It carries out the reaction adenine + H2O + H(+) = hypoxanthine + NH4(+). The sequence is that of Adenine deaminase from Shewanella halifaxensis (strain HAW-EB4).